Reading from the N-terminus, the 1412-residue chain is DNA-directed RNA polymerase subunit beta' (1412 aa).

The Mg(2+) site is built by Asp543, Asp545, and Asp547. Positions 1017, 1092, 1099, and 1102 each coordinate Zn(2+).

The protein belongs to the RNA polymerase beta' chain family. The RNAP catalytic core consists of 2 alpha, 1 beta, 1 beta' and 1 omega subunit. When a sigma factor is associated with the core the holoenzyme is formed, which can initiate transcription. Mg(2+) is required as a cofactor. Requires Zn(2+) as cofactor.

The catalysed reaction is RNA(n) + a ribonucleoside 5'-triphosphate = RNA(n+1) + diphosphate. DNA-dependent RNA polymerase catalyzes the transcription of DNA into RNA using the four ribonucleoside triphosphates as substrates. This is DNA-directed RNA polymerase subunit beta' from Mesomycoplasma hyopneumoniae (strain 232) (Mycoplasma hyopneumoniae).